The primary structure comprises 300 residues: Protoheme IX farnesyltransferase (300 aa).

9 consecutive transmembrane segments (helical) span residues 24–44 (VTQLAVFCAVIGMFLATPGMV), 46–66 (WHVLIGGTVGIWLLAGAAFAI), 94–114 (PQILIFSAVLGSVGAWTLYTF), 118–138 (LTMWLTIATFVGYAVIYTLLL), 146–166 (IVIGGASGAMPPALGWAAVTG), 172–192 (AWILVLIIFVWTPPHFWVLAL), 217–237 (LHILLYTVILFAVTLMPFISG), 239–259 (SGAVYLTSAVLLGAVFLAYAW), and 278–298 (IVYLSLLFAALLVDHYARPLL).

The protein belongs to the UbiA prenyltransferase family. Protoheme IX farnesyltransferase subfamily.

It is found in the cell inner membrane. The enzyme catalyses heme b + (2E,6E)-farnesyl diphosphate + H2O = Fe(II)-heme o + diphosphate. It functions in the pathway porphyrin-containing compound metabolism; heme O biosynthesis; heme O from protoheme: step 1/1. Converts heme B (protoheme IX) to heme O by substitution of the vinyl group on carbon 2 of heme B porphyrin ring with a hydroxyethyl farnesyl side group. This Burkholderia lata (strain ATCC 17760 / DSM 23089 / LMG 22485 / NCIMB 9086 / R18194 / 383) protein is Protoheme IX farnesyltransferase.